Reading from the N-terminus, the 206-residue chain is Large ribosomal subunit protein uL4 (206 aa).

Positions 43–78 (ARSGNRKQKDREEVHHTTKKPWRQKGTGRARAGMSS) are disordered. The segment covering 49 to 58 (KQKDREEVHH) has biased composition (basic and acidic residues). Basic residues predominate over residues 59-70 (TTKKPWRQKGTG).

This sequence belongs to the universal ribosomal protein uL4 family. In terms of assembly, part of the 50S ribosomal subunit.

One of the primary rRNA binding proteins, this protein initially binds near the 5'-end of the 23S rRNA. It is important during the early stages of 50S assembly. It makes multiple contacts with different domains of the 23S rRNA in the assembled 50S subunit and ribosome. Functionally, forms part of the polypeptide exit tunnel. This is Large ribosomal subunit protein uL4 from Herminiimonas arsenicoxydans.